The sequence spans 636 residues: Interleukin-27 receptor subunit alpha (636 aa).

The first 32 residues, Met-1 to Pro-32, serve as a signal peptide directing secretion. Over Gln-33–Lys-516 the chain is Extracellular. Asn-51 and Asn-76 each carry an N-linked (GlcNAc...) asparagine glycan. Positions Pro-131 to Ser-231 constitute a Fibronectin type-III 1 domain. The WSXWS motif signature appears at Trp-217 to Ser-221. N-linked (GlcNAc...) asparagine glycans are attached at residues Asn-302, Asn-311, Asn-374, Asn-382, and Asn-467. Fibronectin type-III domains follow at residues Ala-322–Leu-417 and Gly-419–Asn-511. Residues Val-517–Ala-537 traverse the membrane as a helical segment. Topologically, residues Thr-538 to Ala-636 are cytoplasmic. A Box 1 motif motif is present at residues Val-554–Ala-562. Residues Glu-587–Ala-636 form a disordered region. The segment covering Leu-618 to Gly-628 has biased composition (low complexity).

It belongs to the type I cytokine receptor family. Type 2 subfamily. Component of a receptor complex composed of IL6ST/GP130, IL27RA/WSX1 and CNTFR which interacts with the neuroprotective peptide humanin. In terms of tissue distribution, highly expressed in lymphoid tissues such as spleen, lymph nodes and peripheral blood leukocytes. Weakly expressed in other tissues examined including heart, brain, fetal and adult lung, liver, skeletal muscle, kidney, pancreas, prostate, testis, ovary, small intestine, kidney and colon. In the lymphoid system, higher level expression in CD4+ T-cell subsets than in CD8+ T-cell subsets. Also weaker expression in CD19+ B-cells and monocytes.

It is found in the membrane. Functionally, receptor for IL27. Requires IL6ST/GP130 to mediate signal transduction in response to IL27. This signaling system acts through STAT3 and STAT1. Acts as a receptor for the neuroprotective peptide humanin as part of a complex with IL6ST/GP130 and CNTFR. Involved in the regulation of Th1-type immune responses. Also appears to be involved in innate defense mechanisms. The chain is Interleukin-27 receptor subunit alpha (IL27RA) from Homo sapiens (Human).